The chain runs to 1700 residues: Rho guanine nucleotide exchange factor 28 (1700 aa).

A disordered region spans residues 288-335; it reads TERATMPSGAAETEEEVRNLESGRSPSEEEEDGQLVKSQADGPSEQED. Phosphoserine occurs at positions 312, 314, and 478. The segment at 483–525 is disordered; the sequence is VADSEEEGRSEPPICYAVGSQSSPRTGLPGGDELDSFDANTEP. S623 bears the Phosphoserine mark. The Phorbol-ester/DAG-type zinc finger occupies 651–698; sequence RHQFVPGTFSGVLQCSGCDKTLLGKESLQCANCKANTHKGCKDTVPPC. Polar residues predominate over residues 709 to 720; sequence NKPQTILGSSSV. Disordered regions lie at residues 709-761 and 774-799; these read NKPQ…VPGT and ESEG…GSSP. The segment covering 728-737 has biased composition (low complexity); it reads LSLHPSPSMP. Over residues 774 to 783 the composition is skewed to polar residues; that stretch reads ESEGDSNSWR. The 196-residue stretch at 848–1043 folds into the DH domain; it reads KRQDVIFELM…KDMIAAVDLK (196 aa). Residues 1085–1187 form the PH domain; that stretch reads ALLHDGLVYW…WMRRIQQAVE (103 aa). Residues 1186-1207 form a disordered region; sequence VESCPEEEGGRTSESDEERRKA. Positions 1193–1207 are enriched in basic and acidic residues; the sequence is EGGRTSESDEERRKA. The tract at residues 1294–1303 is interaction with PTK2/FAK1; required for regulation of axonal branching and synapse formation; that stretch reads DVSQPSEEGP. The interval 1369–1380 is mediates cytoplasmic retention and interaction with YWHAH; that stretch reads IIQAIQNLTRLL. Positions 1421–1700 are interaction with microtubules; that stretch reads QEKSRYLEKH…DGAEENIVYL (280 aa). Residues 1473-1522 are a coiled coil; the sequence is ERECQSQEELLLRHRSELDHQLQEYQQNLERLREGQRMVERERQRMRDQQ. Residues 1493–1524 form an RNA-binding region; that stretch reads QLQEYQQNLERLREGQRMVERERQRMRDQQGL. The residue at position 1535 (S1535) is a Phosphoserine. A mediates cytoplasmic retention and interaction with MAPK8IP1 region spans residues 1563-1576; the sequence is FLNDAFTHMSLNTS. Residues 1574–1598 form a disordered region; that stretch reads NTSNKPNPSGAPWDAHPPGGSHLDL. Residue S1604 is modified to Phosphoserine. Positions 1612-1700 are disordered; it reads VSQPSDVNSE…DGAEENIVYL (89 aa). Polar residues predominate over residues 1613–1623; it reads SQPSDVNSELW. Positions 1633–1642 are enriched in basic and acidic residues; the sequence is ARQESIKDSC. Residues 1647 to 1672 show a composition bias toward polar residues; the sequence is DLNSFQTESPDPQDSNQRGPQPQTLI.

Homooligomer; forms cytoplasmic aggregates. Forms a complex with MAPK8 and MAPK8IP1. Interacts with RHOA. Interacts with microtubules. Interacts with YWHAE and YWHAH. Interacts with PTK2/FAK1. Interacts with NEFL. Interacts with CTNND2; prevents interaction with RHOA. Phosphorylated on tyrosine upon stimulation of cells by laminin.

It is found in the cytoplasm. Its subcellular location is the cell membrane. Functions as a RHOA-specific guanine nucleotide exchange factor regulating signaling pathways downstream of integrins and growth factor receptors. Functions in axonal branching, synapse formation and dendritic morphogenesis. Also functions in focal adhesion formation, cell motility and B-lymphocytes activation. May regulate NEFL expression and aggregation and play a role in apoptosis. The chain is Rho guanine nucleotide exchange factor 28 (Arhgef28) from Rattus norvegicus (Rat).